Consider the following 151-residue polypeptide: Large ribosomal subunit protein uL22 (151 aa).

The disordered stretch occupies residues 1–25; it reads MARINYSVKEDPETTSKAMGSELHI.

It belongs to the universal ribosomal protein uL22 family. Part of the 50S ribosomal subunit.

This protein binds specifically to 23S rRNA. It makes multiple contacts with different domains of the 23S rRNA in the assembled 50S subunit and ribosome. In terms of biological role, the globular domain of the protein is located near the polypeptide exit tunnel on the outside of the subunit, while an extended beta-hairpin is found that lines the wall of the exit tunnel in the center of the 70S ribosome. This is Large ribosomal subunit protein uL22 from Methanosarcina barkeri (strain Fusaro / DSM 804).